The primary structure comprises 727 residues: Elongation factor 2 (727 aa).

Positions 19 to 260 constitute a tr-type G domain; it reads DQIRNMGICA…MSIKHLPNPL (242 aa). GTP is bound by residues 28 to 35, 94 to 98, and 148 to 151; these read AHIDHGKT, DTPGH, and NKVD. At histidine 603 the chain carries Diphthamide.

This sequence belongs to the TRAFAC class translation factor GTPase superfamily. Classic translation factor GTPase family. EF-G/EF-2 subfamily.

The protein resides in the cytoplasm. Catalyzes the GTP-dependent ribosomal translocation step during translation elongation. During this step, the ribosome changes from the pre-translocational (PRE) to the post-translocational (POST) state as the newly formed A-site-bound peptidyl-tRNA and P-site-bound deacylated tRNA move to the P and E sites, respectively. Catalyzes the coordinated movement of the two tRNA molecules, the mRNA and conformational changes in the ribosome. In Methanococcus maripaludis (strain C5 / ATCC BAA-1333), this protein is Elongation factor 2.